A 491-amino-acid chain; its full sequence is Probable G-protein coupled receptor Mth-like 7 (491 aa).

Residues 1-22 form the signal peptide; it reads MRLPWVIFCTVLLLIFTNNSNA. Residues asparagine 18 and asparagine 42 are each glycosylated (N-linked (GlcNAc...) asparagine). Residues 23–167 lie on the Extracellular side of the membrane; that stretch reads DIPGCNYYDT…EEVSIQIFNK (145 aa). Cystine bridges form between cysteine 27–cysteine 80, cysteine 82–cysteine 87, and cysteine 92–cysteine 103. The chain crosses the membrane as a helical span at residues 168–188; sequence CGLIVWFQDGKFWVTVDLFME. Residues 189–222 lie on the Cytoplasmic side of the membrane; the sequence is KQDYCLYRHNFDSDFPKSMWIIRHRCTSHISPGS. The helical transmembrane segment at 223–243 threads the bilayer; sequence LEILIITMICFVLTIAVYLYI. At 244 to 252 the chain is on the extracellular side; it reads KKLRNVTGK. Asparagine 248 carries an N-linked (GlcNAc...) asparagine glycan. The helical transmembrane segment at 253–273 threads the bilayer; the sequence is CIVCCIVSRFIQCLIMILDHL. Over 274–325 the chain is Cytoplasmic; it reads NLLNGICSPAGYSSHFFRMASNLWLSVISYHTWKVLTSLNRVDPNYRFLRYN. Residues 326–346 traverse the membrane as a helical segment; it reads AFVWSTAAIMTGSIYIVNQIW. Over 347–372 the chain is Extracellular; sequence ENDPSKWNWLPLVGFIRCSVKDWHPS. A helical transmembrane segment spans residues 373–393; the sequence is VWIYISGPSLALSTFNVAMFA. At 394-434 the chain is on the cytoplasmic side; it reads LTAIYIRKVKGGINKFTNEEEGRINCINFDSQTYLQFLRLS. A helical transmembrane segment spans residues 435–455; it reads IVMGLTWIFNVIPYSARLHIF. Residues 456–458 lie on the Extracellular side of the membrane; that stretch reads WEW. Residues 459-479 traverse the membrane as a helical segment; it reads VGIISEYFHSAFGIVLFVLLV. Over 480-491 the chain is Cytoplasmic; sequence LKRSTWTLMMDS.

The protein belongs to the G-protein coupled receptor 2 family. Mth subfamily.

The protein localises to the cell membrane. This is Probable G-protein coupled receptor Mth-like 7 (mthl7) from Drosophila melanogaster (Fruit fly).